Consider the following 371-residue polypeptide: MRDKIRNARRIVVKVGSALVTNNGAGLDKAAMGDWARQIATLRGAGKQVVLVSSGAIAAGMQRLGWQKRPHEMHKLQAAAAVGQMGLVKAYEDAFSRHNLHTAQILLTHDDLADRKRYLNARSTLTTLLELGVVPIINENDTIVTDEIKFGDNDTLGALVANLIEAHALVILTDQQGLYTADPRRDPNATLVCEGRAEDRSYEAMAGGAGTGISRGGMITKIRAAQRAARSGAHTCIASGNEVDALIRLTQAEPLGTLLYATSSPLQARKQWLADHLQLAGDLILDDGAVVALRSGRSLLPVGVVEVGGEFERGAAVACRSAGGDEIARGLVNYSSSECRRIARKSSTQIEKLLGYIDEPELVHRDNMVLR.

Lys-14 contacts ATP. 3 residues coordinate substrate: Ser-54, Asp-141, and Asn-153. 173-174 (TD) serves as a coordination point for ATP. Positions 280–357 (AGDLILDDGA…TQIEKLLGYI (78 aa)) constitute a PUA domain.

This sequence belongs to the glutamate 5-kinase family.

The protein resides in the cytoplasm. It carries out the reaction L-glutamate + ATP = L-glutamyl 5-phosphate + ADP. The protein operates within amino-acid biosynthesis; L-proline biosynthesis; L-glutamate 5-semialdehyde from L-glutamate: step 1/2. Its function is as follows. Catalyzes the transfer of a phosphate group to glutamate to form L-glutamate 5-phosphate. This Aromatoleum aromaticum (strain DSM 19018 / LMG 30748 / EbN1) (Azoarcus sp. (strain EbN1)) protein is Glutamate 5-kinase.